The chain runs to 449 residues: Signal recognition particle protein (449 aa).

Residues 109–116 (GLQGSGKT), 191–195 (DTAGR), and 249–252 (SRID) each bind GTP.

It belongs to the GTP-binding SRP family. SRP54 subfamily. In terms of assembly, part of the signal recognition particle protein translocation system, which is composed of SRP and FtsY. SRP is a ribonucleoprotein composed of Ffh and a 4.5S RNA molecule.

The protein localises to the cytoplasm. The catalysed reaction is GTP + H2O = GDP + phosphate + H(+). In terms of biological role, involved in targeting and insertion of nascent membrane proteins into the cytoplasmic membrane. Binds to the hydrophobic signal sequence of the ribosome-nascent chain (RNC) as it emerges from the ribosomes. The SRP-RNC complex is then targeted to the cytoplasmic membrane where it interacts with the SRP receptor FtsY. Interaction with FtsY leads to the transfer of the RNC complex to the Sec translocase for insertion into the membrane, the hydrolysis of GTP by both Ffh and FtsY, and the dissociation of the SRP-FtsY complex into the individual components. The polypeptide is Signal recognition particle protein (Rickettsia bellii (strain RML369-C)).